The following is a 525-amino-acid chain: Retinoblastoma-binding-like protein E (525 aa).

5 WD repeats span residues proline 25–threonine 66, histidine 69–serine 108, serine 222–glutamine 261, aspartate 267–glutamate 312, and glycine 313–serine 352. Disordered regions lie at residues aspartate 371–tyrosine 398 and glutamate 462–lysine 525. Low complexity predominate over residues glutamine 383–asparagine 392. A compositionally biased stretch (basic and acidic residues) spans glutamate 462–serine 471. Low complexity predominate over residues serine 472–serine 500. Residues glutamine 501–lysine 525 show a composition bias toward basic and acidic residues.

The protein localises to the nucleus. Its function is as follows. Involved in mono-, di- and trimethylation at 'Lys-4' of histone H3. Histone H3 'Lys-4' methylation represents a specific tag for epigenetic transcriptional activation. This Dictyostelium discoideum (Social amoeba) protein is Retinoblastoma-binding-like protein E.